The primary structure comprises 215 residues: Probable nicotinate-nucleotide adenylyltransferase (215 aa).

The protein belongs to the NadD family.

It carries out the reaction nicotinate beta-D-ribonucleotide + ATP + H(+) = deamido-NAD(+) + diphosphate. It functions in the pathway cofactor biosynthesis; NAD(+) biosynthesis; deamido-NAD(+) from nicotinate D-ribonucleotide: step 1/1. Functionally, catalyzes the reversible adenylation of nicotinate mononucleotide (NaMN) to nicotinic acid adenine dinucleotide (NaAD). This Gluconacetobacter diazotrophicus (strain ATCC 49037 / DSM 5601 / CCUG 37298 / CIP 103539 / LMG 7603 / PAl5) protein is Probable nicotinate-nucleotide adenylyltransferase.